A 111-amino-acid chain; its full sequence is MSDAAVDTSSEITTKDLKEKKEVVEEAENGRDAPANGNAENEENGEQEADNEVDEEEEEGGEEEEEEEEGDGEEEDGDEDEEAESATGKRAAEDDEDDDVDTKKQKTDEDD.

The residue at position 1 (Met1) is an N-acetylmethionine. The segment at 1–111 (MSDAAVDTSS…TKKQKTDEDD (111 aa)) is disordered. Ser2 bears the N-acetylserine; in Prothymosin alpha, N-terminally processed mark. Ser2 is subject to Phosphoserine. Thr8 carries the post-translational modification Phosphothreonine. Phosphoserine is present on residues Ser9 and Ser10. Phosphothreonine is present on residues Thr13 and Thr14. The span at 13–31 (TTKDLKEKKEVVEEAENGR) shows a compositional bias: basic and acidic residues. N6-acetyllysine; alternate is present on Lys15. N6-succinyllysine; alternate is present on Lys15. A compositionally biased stretch (acidic residues) spans 40-84 (ENEENGEQEADNEVDEEEEEGGEEEEEEEEGDGEEEDGDEDEEAE). Basic and acidic residues predominate over residues 101 to 111 (DTKKQKTDEDD). At Thr102 the chain carries Phosphothreonine. Lys103 is modified (N6-acetyllysine; alternate). Lys103 participates in a covalent cross-link: Glycyl lysine isopeptide (Lys-Gly) (interchain with G-Cter in SUMO2); alternate. A Phosphothreonine modification is found at Thr107.

It belongs to the pro/parathymosin family. As to quaternary structure, interacts with NUPR1; regulates apoptotic process. Post-translationally, covalently linked to a small RNA of about 20 nucleotides.

It is found in the nucleus. In terms of biological role, prothymosin alpha may mediate immune function by conferring resistance to certain opportunistic infections. The polypeptide is Prothymosin alpha (PTMA) (Homo sapiens (Human)).